Consider the following 467-residue polypeptide: Transcription factor CRF1 (467 aa).

Residues 1-10 show a composition bias toward polar residues; the sequence is MLLSAPVNST. Disordered regions lie at residues 1–42, 62–110, 151–170, and 341–361; these read MLLS…VVLS, DFES…SSKT, SKSESHRQYHSPSASTTNED, and TYRDDESTDEDESLPTPDRKR. A compositionally biased stretch (basic residues) spans 11 to 23; that stretch reads VRRKPHSPNKKKP. Residues 28–42 are compositionally biased toward low complexity; sequence TAASFSSSSSTVVLS. Basic and acidic residues predominate over residues 89 to 102; sequence YSREENTNEVEEKT.

In terms of assembly, interacts with FHL1 to form a repressor complex. The formation of the CRF1-FHL1 complex is inhibited by the TOR pathway. Post-translationally, phosphorylated by CDC28 and YAK1.

It is found in the cytoplasm. The protein localises to the nucleus. In terms of biological role, transcription factor, corepressor with FHL1 of ribosomal protein genes. May be involved in the blocking of the spread of silencing. The chain is Transcription factor CRF1 (CRF1) from Saccharomyces cerevisiae (strain ATCC 204508 / S288c) (Baker's yeast).